A 723-amino-acid chain; its full sequence is Catalase-peroxidase (723 aa).

Positions 98-226 form a cross-link, tryptophyl-tyrosyl-methioninium (Trp-Tyr) (with M-252); that stretch reads WHSAGSYRVG…LAAVMMGLIY (129 aa). Catalysis depends on His-99, which acts as the Proton acceptor. The segment at residues 226–252 is a cross-link (tryptophyl-tyrosyl-methioninium (Tyr-Met) (with W-98)); that stretch reads YVNPEGVDGNPDPLKTAKDMRVTFARM. His-267 is a heme b binding site.

This sequence belongs to the peroxidase family. Peroxidase/catalase subfamily. As to quaternary structure, homodimer or homotetramer. Requires heme b as cofactor. Post-translationally, formation of the three residue Trp-Tyr-Met cross-link is important for the catalase, but not the peroxidase activity of the enzyme.

It carries out the reaction H2O2 + AH2 = A + 2 H2O. The enzyme catalyses 2 H2O2 = O2 + 2 H2O. In terms of biological role, bifunctional enzyme with both catalase and broad-spectrum peroxidase activity. The chain is Catalase-peroxidase from Vibrio vulnificus (strain CMCP6).